A 99-amino-acid polypeptide reads, in one-letter code: Small ribosomal subunit protein uS14m (99 aa).

It belongs to the universal ribosomal protein uS14 family.

Its subcellular location is the mitochondrion. This Acanthamoeba castellanii (Amoeba) protein is Small ribosomal subunit protein uS14m (RPS14).